Consider the following 485-residue polypeptide: D-alanine--D-alanyl carrier protein ligase (485 aa).

ATP is bound at residue 144–145 (TS). Asp-189 provides a ligand contact to D-alanine. An ATP-binding site is contributed by 284–289 (NTYGPT). Val-293 lines the D-alanine pocket. 2 residues coordinate ATP: Asp-365 and Lys-473. Lys-473 provides a ligand contact to D-alanine.

The protein belongs to the ATP-dependent AMP-binding enzyme family. DltA subfamily.

The protein localises to the cytoplasm. The catalysed reaction is holo-[D-alanyl-carrier protein] + D-alanine + ATP = D-alanyl-[D-alanyl-carrier protein] + AMP + diphosphate. The protein operates within cell wall biogenesis; lipoteichoic acid biosynthesis. In terms of biological role, catalyzes the first step in the D-alanylation of lipoteichoic acid (LTA), the activation of D-alanine and its transfer onto the D-alanyl carrier protein (Dcp) DltC. In an ATP-dependent two-step reaction, forms a high energy D-alanyl-AMP intermediate, followed by transfer of the D-alanyl residue as a thiol ester to the phosphopantheinyl prosthetic group of the Dcp. D-alanylation of LTA plays an important role in modulating the properties of the cell wall in Gram-positive bacteria, influencing the net charge of the cell wall. The sequence is that of D-alanine--D-alanyl carrier protein ligase from Staphylococcus haemolyticus (strain JCSC1435).